The sequence spans 435 residues: Islet cell autoantigen 1-like protein (435 aa).

Positions 44–247 (ASDAELDAKL…TAQMMSQIQE (204 aa)) constitute an AH domain. A disordered region spans residues 391–435 (WASQEGSEHSDTLPVPSQHPKKLKYLGPLSNPDAIGHSDDELLNA). The span at 426-435 (GHSDDELLNA) shows a compositional bias: basic and acidic residues.

This Rattus norvegicus (Rat) protein is Islet cell autoantigen 1-like protein (Ica1l).